A 651-amino-acid chain; its full sequence is Chaperone protein dnaK1 (651 aa).

Phosphothreonine; by autocatalysis is present on Thr-197.

This sequence belongs to the heat shock protein 70 family.

Its function is as follows. Acts as a chaperone. The protein is Chaperone protein dnaK1 (dnaK1) of Thermosynechococcus vestitus (strain NIES-2133 / IAM M-273 / BP-1).